The following is a 366-amino-acid chain: Aliphatic nitrilase (366 aa).

The CN hydrolase domain maps to 8–282 (FKVAAVQAQP…EGILYADIDL (275 aa)). Residue Glu48 is the Proton acceptor of the active site. Lys131 acts as the Proton donor in catalysis. The Nucleophile role is filled by Cys165. The segment at 346 to 366 (DEQRALPSTHSDETDRATASI) is disordered. Residues 355 to 366 (HSDETDRATASI) show a composition bias toward basic and acidic residues.

This sequence belongs to the carbon-nitrogen hydrolase superfamily. Nitrilase family. As to quaternary structure, homodimer.

It carries out the reaction an aliphatic nitrile + 2 H2O = a carboxylate + NH4(+). The sequence is that of Aliphatic nitrilase (nitA) from Rhodococcus rhodochrous.